A 1725-amino-acid chain; its full sequence is Latrophilin Cirl (1725 aa).

Residues 1-757 are Extracellular-facing; it reads MALNELGNCA…LFTMFDGNMR (757 aa). Residues 18 to 107 form the SUEL-type lectin domain; that stretch reads ACEGKQLTIE…KYLEAHYQCI (90 aa). N-linked (GlcNAc...) asparagine glycosylation occurs at N135. The segment at 164-284 is disordered; that stretch reads AVQPTHSTPS…SAANNSVNIG (121 aa). 2 stretches are compositionally biased toward low complexity: residues 167–176 and 224–236; these read PTHSTPSSST and SSSSSSNSGSAGN. N236, N278, N326, N388, N645, N693, and N720 each carry an N-linked (GlcNAc...) asparagine glycan. A compositionally biased stretch (polar residues) spans 259 to 282; that stretch reads LLTTKSSPNRTPGTTASAANNSVN. The segment at 361–390 is disordered; that stretch reads DDEYDDDLPAASSTTPQPSNNGGDCVHNSS. The segment covering 371-390 has biased composition (polar residues); that stretch reads ASSTTPQPSNNGGDCVHNSS. The GAIN-B domain occupies 551 to 744; the sequence is RNVVQKVKNI…AILMDVVDEH (194 aa). 2 disulfide bridges follow: C699–C726 and C714–C728. Positions 699–744 are GPS; sequence CVFWNYIDHAWSANGCSLESTNRTHSVCSCNHLTNFAILMDVVDEH. A helical membrane pass occupies residues 758-778; the sequence is IFIYISVAICVVFIIIALLTL. At 779-791 the chain is on the cytoplasmic side; sequence KLFNGVFVKSART. A helical membrane pass occupies residues 792–812; that stretch reads SIYSSIYICLLAIELLFLLGI. Over 813–818 the chain is Extracellular; the sequence is EQTETS. The helical transmembrane segment at 819–839 threads the bilayer; sequence IFCGFITVFLHCAILSGTAWF. The Cytoplasmic portion of the chain corresponds to 840–865; that stretch reads CYEAFHSYSTLTSDELLLEVDQTPKV. A helical membrane pass occupies residues 866–886; the sequence is NCYYLLSYGLSLSVVAISLVI. At 887–910 the chain is on the extracellular side; the sequence is DPSTYTQNDYCVLMEANALFYSTF. Residues 911-931 form a helical membrane-spanning segment; the sequence is VAPVLIFFVAAITYTFLSWII. Over 932–958 the chain is Cytoplasmic; sequence MRRKSRTALKTKEHTRLANVRFDIRCS. A helical transmembrane segment spans residues 959-979; sequence FVFLLLLSVVWCCAYFYLRGA. At 980-986 the chain is on the extracellular side; it reads KLDEDGA. The helical transmembrane segment at 987 to 1007 threads the bilayer; the sequence is PIYGYCFICFNTLLGIYIFVF. Residues 1008 to 1725 are Cytoplasmic-facing; sequence HCIQNEKIRR…VRCYLEPLAK (718 aa). Residues 1056-1088 form a disordered region; the sequence is TANQSAGTLSKSKSKLPLGAGDEARDGDAQQQQ. S1153 bears the Phosphoserine mark. 4 disordered regions span residues 1236-1263, 1309-1337, 1472-1555, and 1636-1705; these read HNNQHGKKKRGGGAGAVPASPSGSLHSR, QQLQQQQLRQQRQQQQQQLSSDEEQAEQH, GGGS…SDER, and LFGH…QARH. Positions 1237–1246 are enriched in basic residues; sequence NNQHGKKKRG. 2 positions are modified to phosphoserine: S1255 and S1262. A compositionally biased stretch (low complexity) spans 1309–1327; sequence QQLQQQQLRQQRQQQQQQL. A phosphoserine mark is found at S1328 and S1329. Residues 1478–1496 show a composition bias toward low complexity; that stretch reads GGSVTSRSQQQQQQQLKQK. Composition is skewed to acidic residues over residues 1505–1522 and 1532–1543; these read DDDDDDDDDDDEYDDEVT and CDDEDNESDIDD. The segment covering 1651 to 1666 has biased composition (polar residues); the sequence is QTPAQKRQQLQKLSPQ. Over residues 1667–1683 the composition is skewed to low complexity; it reads STTSSSSHTSHSNPQHA. A compositionally biased stretch (basic residues) spans 1684 to 1693; it reads PAHHLQHHHT. Residues 1694 to 1705 show a composition bias toward low complexity; that stretch reads QQQQQQQQQARH.

This sequence belongs to the G-protein coupled receptor 2 family. LN-TM7 subfamily. In terms of assembly, forms a heterodimer, consisting of a large extracellular region non-covalently linked to a seven-transmembrane moiety. In terms of processing, proteolytically cleaved into 2 subunits, an extracellular subunit and a seven-transmembrane subunit.

Its subcellular location is the cell membrane. This Drosophila mojavensis (Fruit fly) protein is Latrophilin Cirl.